A 352-amino-acid polypeptide reads, in one-letter code: Heat-inducible transcription repressor HrcA (352 aa).

It belongs to the HrcA family.

Negative regulator of class I heat shock genes (grpE-dnaK-dnaJ and groELS operons). Prevents heat-shock induction of these operons. This chain is Heat-inducible transcription repressor HrcA, found in Chlorobium phaeobacteroides (strain BS1).